Here is a 235-residue protein sequence, read N- to C-terminus: Putative homeobox-leucine zipper protein ATHB-51 (235 aa).

The segment at residues 74 to 133 (EMIKKKRLTSGQLASLERSFQEEIKLDSDRKVKLSRELGLQPRQIAVWFQNRRARWKAKQ) is a DNA-binding region (homeobox). The interval 134–162 (LEQLYDSLRQEYDVVSREKQMLHDEVKKL) is leucine-zipper.

It belongs to the HD-ZIP homeobox family. Class I subfamily. As to expression, widely expressed.

The protein resides in the nucleus. Its function is as follows. Putative transcription factor. The chain is Putative homeobox-leucine zipper protein ATHB-51 (ATHB-51) from Arabidopsis thaliana (Mouse-ear cress).